The primary structure comprises 352 residues: Photosystem II protein D1 (352 aa).

Threonine 2 carries the post-translational modification N-acetylthreonine. At threonine 2 the chain carries Phosphothreonine. Helical transmembrane passes span 29 to 46, 118 to 133, and 142 to 156; these read YIGW…TATS, HFLL…EWEL, and WIAV…AATA. Histidine 118 is a chlorophyll a binding site. Tyrosine 126 contacts pheophytin a. 2 residues coordinate [CaMn4O5] cluster: aspartate 170 and glutamate 189. The helical transmembrane segment at 197–218 threads the bilayer; it reads FHMLGVAGVFGGSLFSAMHGSL. Histidine 198 is a chlorophyll a binding site. Residues histidine 215 and 264-265 contribute to the a quinone site; that span reads SF. Position 215 (histidine 215) interacts with Fe cation. Histidine 272 is a Fe cation binding site. Residues 274-288 traverse the membrane as a helical segment; the sequence is FLAAWPVVGIWFTAL. [CaMn4O5] cluster-binding residues include histidine 332, glutamate 333, aspartate 342, and alanine 344. Positions 345–352 are excised as a propeptide; the sequence is SVEAPVVG.

Belongs to the reaction center PufL/M/PsbA/D family. As to quaternary structure, PSII is composed of 1 copy each of membrane proteins PsbA, PsbB, PsbC, PsbD, PsbE, PsbF, PsbH, PsbI, PsbJ, PsbK, PsbL, PsbM, PsbT, PsbX, PsbY, PsbZ, Psb30/Ycf12, at least 3 peripheral proteins of the oxygen-evolving complex and a large number of cofactors. It forms dimeric complexes. The D1/D2 heterodimer binds P680, chlorophylls that are the primary electron donor of PSII, and subsequent electron acceptors. It shares a non-heme iron and each subunit binds pheophytin, quinone, additional chlorophylls, carotenoids and lipids. D1 provides most of the ligands for the Mn4-Ca-O5 cluster of the oxygen-evolving complex (OEC). There is also a Cl(-1) ion associated with D1 and D2, which is required for oxygen evolution. The PSII complex binds additional chlorophylls, carotenoids and specific lipids. serves as cofactor. In terms of processing, tyr-161 forms a radical intermediate that is referred to as redox-active TyrZ, YZ or Y-Z. Post-translationally, C-terminally processed by CTPA; processing is essential to allow assembly of the oxygen-evolving complex and thus photosynthetic growth.

The protein resides in the plastid. It localises to the chloroplast thylakoid membrane. It carries out the reaction 2 a plastoquinone + 4 hnu + 2 H2O = 2 a plastoquinol + O2. Photosystem II (PSII) is a light-driven water:plastoquinone oxidoreductase that uses light energy to abstract electrons from H(2)O, generating O(2) and a proton gradient subsequently used for ATP formation. It consists of a core antenna complex that captures photons, and an electron transfer chain that converts photonic excitation into a charge separation. The D1/D2 (PsbA/PsbD) reaction center heterodimer binds P680, the primary electron donor of PSII as well as several subsequent electron acceptors. The sequence is that of Photosystem II protein D1 from Zygnema circumcarinatum (Green alga).